The chain runs to 409 residues: MRGGQGAARAPVIQFTNCRILRGGALLREDLWVRGGRILDPEKLFFEERRVADEQRDCGGCILAPGFIDVQINGGFGVDFSQASEDVGSGVALVARRILSHGVTSFCPTLVTSPLEVYHKVLPQIPVKSGGPHGAGVLGVHLEGPFISREKRGAHPEAHLRSFEADAFQDVLATYGGLDNVRIVTLAPELGHSQEVIRALTALGICVSLGHSVADLGTAEEAVQSGATFITHLFNAMLPFHHRDPGIVGLLTSDRLPAGRHIFYGMIADGIHTNPAALRIAHRAHPKGLVLVTDAVPALGLGNGRHTLGQQEVEVDGLTAYVAGTNTLSGSIAPMDTCVRHFLQATGCSVESALEAASLHPAQLLGLEKRKGTLDFGADADFVVLDDSLHVRATYISGELVWQVEEARP.

Position 143 (glutamate 143) interacts with a divalent metal cation. 154–155 (AH) provides a ligand contact to substrate. Positions 211 and 232 each coordinate a divalent metal cation. Substrate is bound by residues 235-236 (NA), arginine 243, and 269-272 (DGIH). Aspartate 294 functions as the Proton donor/acceptor in the catalytic mechanism. Residue 328–330 (LSG) participates in substrate binding.

This sequence belongs to the metallo-dependent hydrolases superfamily. NagA family. A divalent metal cation serves as cofactor.

The enzyme catalyses N-acetyl-D-glucosamine 6-phosphate + H2O = D-glucosamine 6-phosphate + acetate. The protein operates within amino-sugar metabolism; N-acetylneuraminate degradation. In terms of biological role, hydrolyzes the N-glycolyl group from N-glycolylglucosamine 6-phosphate (GlcNGc-6-P) in the N-glycolylneuraminic acid (Neu5Gc) degradation pathway. The chain is N-acetylglucosamine-6-phosphate deacetylase (AMDHD2) from Bos taurus (Bovine).